The primary structure comprises 256 residues: uncharacterized protein (256 aa).

The protein to B.subtilis LplA.

This is an uncharacterized protein from Niallia circulans (Bacillus circulans).